Consider the following 644-residue polypeptide: Protein ecdysoneless homolog (644 aa).

Disordered stretches follow at residues 430 to 449 (AVGKKESESVSKEEKEQNYD), 496 to 537 (LGPR…SLKG), 567 to 589 (QVEPVSQTTDNNSDEEDSGTGES), and 623 to 644 (QSMGVQLPDNTDHRPTSKPTKN). Over residues 431–447 (VGKKESESVSKEEKEQN) the composition is skewed to basic and acidic residues. The transcription activation stretch occupies residues 439–644 (VSKEEKEQNY…HRPTSKPTKN (206 aa)). The interval 481–497 (ITFDADSFLNYFDKILG) is involved in nuclear export. Residues 502-532 (ESDSDDLDDEDFECLDSDDDLDFETHEPGEE) are acidic region required for transactivation activity. A phosphoserine mark is found at Ser503, Ser505, and Ser518. Acidic residues predominate over residues 503–523 (SDSDDLDDEDFECLDSDDDLD). Basic and acidic residues predominate over residues 524-534 (FETHEPGEEAS). Polar residues predominate over residues 567–577 (QVEPVSQTTDN).

The protein belongs to the ECD family. Interacts with TP53, MDM2, TXNIP. Interacts (phosphorylated) with PIH1D1. Interacts with RUVBL1 mediating the PIH1D1-independent association with the R2TP complex. Interacts with RB1, RBL1 and RBL2; ECD competes with E2F1 for binding to hypophospshorylated RB1. Interacts with EP300. Interacts with DDX39A. Phosphorylated predominantly by CK2 on two serine-containing clusters; involved in cell cycle regulation activity. In terms of tissue distribution, highly expressed in muscle and heart. Over-expressed in pancreatic and breast cancers.

The protein localises to the cytoplasm. The protein resides in the nucleus. Regulator of p53/TP53 stability and function. Inhibits MDM2-mediated degradation of p53/TP53 possibly by cooperating in part with TXNIP. May be involved transcriptional regulation. In vitro has intrinsic transactivation activity enhanced by EP300. May be a transcriptional activator required for the expression of glycolytic genes. Involved in regulation of cell cycle progression. Proposed to disrupt Rb-E2F binding leading to transcriptional activation of E2F proteins. The cell cycle -regulating function may depend on its RUVBL1-mediated association with the R2TP complex. May play a role in regulation of pre-mRNA splicing. Participates together with DDX39A in mRNA nuclear export. The sequence is that of Protein ecdysoneless homolog (ECD) from Homo sapiens (Human).